The following is a 70-amino-acid chain: DNA-directed RNA polymerase subunit omega (70 aa).

The protein belongs to the RNA polymerase subunit omega family. As to quaternary structure, the RNAP catalytic core consists of 2 alpha, 1 beta, 1 beta' and 1 omega subunit. When a sigma factor is associated with the core the holoenzyme is formed, which can initiate transcription.

The enzyme catalyses RNA(n) + a ribonucleoside 5'-triphosphate = RNA(n+1) + diphosphate. In terms of biological role, promotes RNA polymerase assembly. Latches the N- and C-terminal regions of the beta' subunit thereby facilitating its interaction with the beta and alpha subunits. This Bacillus cytotoxicus (strain DSM 22905 / CIP 110041 / 391-98 / NVH 391-98) protein is DNA-directed RNA polymerase subunit omega.